Here is a 455-residue protein sequence, read N- to C-terminus: ADP-dependent glucose/glucosamine kinase (455 aa).

The 454-residue stretch at 2 to 455 folds into the ADPK domain; that stretch reads PTWEELYKNA…AFIGEFSFTL (454 aa). D-glucose-binding positions include D34, E88, 112 to 113, and H176; that span reads GQ. E195 lines the ADP pocket. E266 contacts Mg(2+). ADP is bound at residue N292. Residue E295 coordinates Mg(2+). Residues 342-343, V429, and G439 contribute to the ADP site; that span reads HT. D440 is a binding site for D-glucose. D440 is a Mg(2+) binding site. The active-site Proton acceptor is the D440.

The protein belongs to the ADP-dependent glucokinase family. In terms of assembly, homodimer. Mg(2+) serves as cofactor.

The protein resides in the cytoplasm. The catalysed reaction is D-glucose + ADP = D-glucose 6-phosphate + AMP + H(+). It catalyses the reaction D-glucosamine + ADP = D-glucosamine 6-phosphate + AMP + H(+). The protein operates within carbohydrate degradation; glycolysis. In terms of biological role, catalyzes the ADP-dependent phosphorylation of D-glucose to D-glucose 6-phosphate and glucosamine to glucosamine 6-phosphate. Can also use CDP as the phosphoryl group donor and D-1,5-anhydroglucitol as the phosphoryl group acceptor. The polypeptide is ADP-dependent glucose/glucosamine kinase (Pyrococcus furiosus (strain ATCC 43587 / DSM 3638 / JCM 8422 / Vc1)).